A 538-amino-acid chain; its full sequence is BTB/POZ domain-containing protein 6 (538 aa).

A signal peptide spans 1–17 (MLLPLACLHGRVAQCLT). Disordered regions lie at residues 29–53 (PRRG…PPAK) and 76–115 (AAVG…SPGW). Low complexity predominate over residues 35–53 (ARGAASTGAEAAPAAPPAK). Residues 85–103 (RSPPSAPAPAPPPPAPAPP) show a composition bias toward pro residues. One can recognise a BTB domain in the interval 136–206 (ADVHFVVGPP…MYSDEIDLEA (71 aa)).

In terms of tissue distribution, expressed in lens.

The protein localises to the cytoplasm. In terms of biological role, adapter protein for the cul3 E3 ubiquitin-protein ligase complex. Involved in late neuronal development and muscle formation. The sequence is that of BTB/POZ domain-containing protein 6 from Homo sapiens (Human).